We begin with the raw amino-acid sequence, 110 residues long: UPF0122 protein SE_0911 (110 aa).

Belongs to the UPF0122 family.

Might take part in the signal recognition particle (SRP) pathway. This is inferred from the conservation of its genetic proximity to ftsY/ffh. May be a regulatory protein. The chain is UPF0122 protein SE_0911 from Staphylococcus epidermidis (strain ATCC 12228 / FDA PCI 1200).